The primary structure comprises 459 residues: NADH oxidase (459 aa).

Asparagine 10 contributes to the FAD binding site. Residue histidine 11 is the Proton acceptor of the active site. FAD contacts are provided by alanine 12, aspartate 34, glutamine 35, cysteine 44, valine 81, alanine 110, serine 113, lysine 143, and tyrosine 172. Catalysis depends on cysteine 44, which acts as the Redox-active. Cysteine 44 bears the Cysteine sulfinic acid (-SO2H) mark. The NAD(+) site is built by isoleucine 173, aspartate 192, tyrosine 201, and glycine 256. Aspartate 294 contacts FAD. Alanine 310 lines the NAD(+) pocket. Residues leucine 311, alanine 312, and serine 313 each contribute to the FAD site. Glycine 341 serves as a coordination point for NAD(+). Phenylalanine 439 is a binding site for FAD.

The protein belongs to the class-III pyridine nucleotide-disulfide oxidoreductase family. Requires FAD as cofactor.

It localises to the secreted. Its subcellular location is the cell wall. It carries out the reaction 2 NADH + O2 + 2 H(+) = 2 NAD(+) + 2 H2O. Functionally, catalyzes the four-electron reduction of molecular oxygen to water. Plays a role in redox balance maintenance. May be involved in mediating bacterial adhesion to host cells. May be considered a potential virulence factor. In Streptococcus pneumoniae (strain ATCC BAA-255 / R6), this protein is NADH oxidase.